A 342-amino-acid chain; its full sequence is Inositol-tetrakisphosphate 1-kinase 1 (342 aa).

2 residues coordinate 1D-myo-inositol 6-phosphate: K28 and K70. 2 residues coordinate ATP: R105 and K155. Positions 116 to 332 (DHAADQDSTF…HKDGVGNQQE (217 aa)) constitute an ATP-grasp domain. 2 residues coordinate 1D-myo-inositol 6-phosphate: G161 and H166. The ATP site is built by H166, Q187, and V190. K198 and Y200 together coordinate 1D-myo-inositol 6-phosphate. S213 provides a ligand contact to ATP. The tract at residues 219–247 (PEDDASAQGSVSFSQVSNLPTERTAEEYY) is catalytic specificity elements (CSE). N280 is a binding site for 1D-myo-inositol 6-phosphate. D282 contacts Mg(2+). Residues I296, D297, and N299 each coordinate ATP. D297 and N299 together coordinate Mg(2+). 3 residues coordinate 1D-myo-inositol 6-phosphate: N299, G303, and K306.

Belongs to the ITPK1 family. Monomer. The cofactor is Mg(2+). Expressed in the embryo of 15 day after pollination. Expressed in kernels at earlier stages but at very low levels. Expression in the embryo peaks at 15 days after pollination and then declines. No expression is detected from endosperm and vegetative tissues.

It carries out the reaction 1D-myo-inositol 3,4,5,6-tetrakisphosphate + ATP = 1D-myo-inositol 1,3,4,5,6-pentakisphosphate + ADP + H(+). The catalysed reaction is 1D-myo-inositol 1,3,4-trisphosphate + ATP = 1D-myo-inositol 1,3,4,5-tetrakisphosphate + ADP + H(+). The enzyme catalyses 1D-myo-inositol 1,3,4-trisphosphate + ATP = 1D-myo-inositol 1,3,4,6-tetrakisphosphate + ADP + H(+). It catalyses the reaction 1D-myo-inositol 1,2,3,4,5-pentakisphosphate + ATP = 3-diphospho-1D-myo-inositol 1,2,4,5-tetrakisphosphate + ADP. It carries out the reaction 1D-myo-inositol hexakisphosphate + ATP = 5-diphospho-1D-myo-inositol 1,2,3,4,6-pentakisphosphate + ADP. In terms of biological role, kinase that can phosphorylate various inositol polyphosphate such as Ins(3,4,5,6)P4 or Ins(1,3,4)P3 and participates in phytic acid biosynthesis in developing seeds. Phosphorylates Ins(3,4,5,6)P4 at position 1 to form Ins(1,3,4,5,6)P5. This reaction is thought to have regulatory importance, since Ins(3,4,5,6)P4 is an inhibitor of plasma membrane Ca(2+)-activated Cl(-) channels, while Ins(1,3,4,5,6)P5 is not. Also phosphorylates Ins(1,3,4)P3 on O-5 and O-6 to form Ins(1,3,4,6)P4, an essential molecule in the hexakisphosphate (InsP6) pathway. Also able to phosphorylate Ins(3,5,6)P3 but not Ins(1,4,5)P3, Ins(2,4,5)P3, Ins(1,3,4,6)P4 nor Ins(1,3,5,6)P4. Has higher specific activity on Ins(3,4,5,6)P4 than Ins(1,3,4)P3 and Ins(3,5,6)P3. Can also could use Ins(1,2,5,6)P4 as a substrate. Able to add a beta-phosphate to the 3 positions of Ins(1,2,3,4,5)P5 and to add beta-phosphate to InsP6 to yield 5-InsP7, thus exhibiting InsP6 kinase activity. Also has Ins(1,3,4,5,6)P5 phosphatase activity. This is Inositol-tetrakisphosphate 1-kinase 1 from Zea mays (Maize).